A 191-amino-acid polypeptide reads, in one-letter code: Pentapeptide repeat protein MfpA (191 aa).

Residues 115 to 154 enclose the Pentapeptide repeat domain; it reads CRLREVSLVGADLRKAVLRRADLTGSRVQDARLEEADLRG.

The protein belongs to the pentapeptide repeat protein family. Homodimer. Probably interacts with DNA gyrase.

Functionally, when present on multicopy plasmids confers increased resistance to fluoroquinolone antibiotics such as ciprofloxacin and sparfloxacin but not the quinolone nalidixic acid. Forms a structure that exhibits size, shape and electrostatic similarity to B-form DNA; it may bind to DNA gyrase which is postulated to protect it from fluoroquinolones. The chain is Pentapeptide repeat protein MfpA from Mycolicibacterium smegmatis (strain ATCC 700084 / mc(2)155) (Mycobacterium smegmatis).